The sequence spans 427 residues: Endothelin-1 receptor (427 aa).

Positions 1 to 20 (METFCFRVSFWVALLGCVIS) are cleaved as a signal peptide. Residues 21-80 (DNPESHSTNLSTHVDDFTTFRGTEFSLVVTTHRPTNLALPSNGSMHNYCPQQTKITSAFK) lie on the Extracellular side of the membrane. N-linked (GlcNAc...) asparagine glycans are attached at residues Asn29 and Asn62. The helical transmembrane segment at 81-102 (YINTVISCTIFIVGMVGNATLL) threads the bilayer. The Cytoplasmic segment spans residues 103–112 (RIIYQNKCMR). Residues 113 to 132 (NGPNALIASLALGDLIYVVI) traverse the membrane as a helical segment. Residues 133–159 (DLPINVFKLLAGRWPFENHDFGVFLCK) are Extracellular-facing. A disulfide bridge connects residues Cys158 and Cys239. A helical transmembrane segment spans residues 160–181 (LFPFLQKSSVGITVLNLCALSV). The Cytoplasmic segment spans residues 182–205 (DRYRAVASWSRVQGIGIPLVTAIE). Residues 206–229 (IVSIWILSFILAIPEAIGFVMVPF) form a helical membrane-spanning segment. Residues 230 to 256 (EYKGEEHKTCMLNATSKFMEFYQDVKD) lie on the Extracellular side of the membrane. Residues 257 to 278 (WWLFGFYFCMPLVCTAIFYTLM) traverse the membrane as a helical segment. The Cytoplasmic portion of the chain corresponds to 279 to 306 (TCEMLNRRNGSLRIALSEHLKQRREVAK). Residues 307 to 328 (TVFCLVVIFALCWFPLHLSRIL) form a helical membrane-spanning segment. Residues 329 to 347 (KKTVYDEMDKNRCELLSFL) lie on the Extracellular side of the membrane. The chain crosses the membrane as a helical span at residues 348–372 (LLMDYIGINLATMNSCINPIALYFV). Residues 373–427 (SKKFKNCFQSCLCCCCYQSKSLMTSVPMNGTSIQWKNHEQNNHNTERSSHKDSIN) are Cytoplasmic-facing. Ser425 carries the phosphoserine modification.

The protein belongs to the G-protein coupled receptor 1 family. Endothelin receptor subfamily. EDNRA sub-subfamily. Interacts with HDAC7 and KAT5.

The protein localises to the cell membrane. Functionally, receptor for endothelin-1. Mediates its action by association with G proteins that activate a phosphatidylinositol-calcium second messenger system. The rank order of binding affinities for ET-A is: ET1 &gt; ET2 &gt;&gt; ET3. The polypeptide is Endothelin-1 receptor (Sus scrofa (Pig)).